Consider the following 241-residue polypeptide: Phosphoadenosine 5'-phosphosulfate reductase (241 aa).

Cys235 acts as the Nucleophile; cysteine thiosulfonate intermediate in catalysis.

Belongs to the PAPS reductase family. CysH subfamily.

The protein resides in the cytoplasm. The enzyme catalyses [thioredoxin]-disulfide + sulfite + adenosine 3',5'-bisphosphate + 2 H(+) = [thioredoxin]-dithiol + 3'-phosphoadenylyl sulfate. Its pathway is sulfur metabolism; hydrogen sulfide biosynthesis; sulfite from sulfate: step 3/3. Catalyzes the formation of sulfite from phosphoadenosine 5'-phosphosulfate (PAPS) using thioredoxin as an electron donor. The polypeptide is Phosphoadenosine 5'-phosphosulfate reductase (Xanthomonas euvesicatoria pv. vesicatoria (strain 85-10) (Xanthomonas campestris pv. vesicatoria)).